The primary structure comprises 163 residues: Phosphopantetheine adenylyltransferase (163 aa).

S10 contacts substrate. ATP contacts are provided by residues 10–11 (SF) and H18. The substrate site is built by K42, L74, and R88. ATP contacts are provided by residues 89–91 (GLR), E99, and 124–130 (YSFLSSS).

Belongs to the bacterial CoaD family. In terms of assembly, homohexamer. Mg(2+) serves as cofactor.

The protein resides in the cytoplasm. It carries out the reaction (R)-4'-phosphopantetheine + ATP + H(+) = 3'-dephospho-CoA + diphosphate. Its pathway is cofactor biosynthesis; coenzyme A biosynthesis; CoA from (R)-pantothenate: step 4/5. Reversibly transfers an adenylyl group from ATP to 4'-phosphopantetheine, yielding dephospho-CoA (dPCoA) and pyrophosphate. The chain is Phosphopantetheine adenylyltransferase from Bacillus mycoides (strain KBAB4) (Bacillus weihenstephanensis).